A 595-amino-acid polypeptide reads, in one-letter code: Solute carrier family 13 member 1 (595 aa).

5 helical membrane-spanning segments follow: residues 13-33, 40-60, 77-97, 113-133, and 134-154; these read FLLV…IRSK, ILFV…ITAL, VASA…CLAT, VMMV…STAF, and LSMW…VEAV. An N-linked (GlcNAc...) asparagine glycan is attached at N174. The segment at 190 to 218 is disordered; it reads QETNERKEKTKPALGSSNDKGKVSSKMET. The segment covering 208 to 218 has biased composition (basic and acidic residues); the sequence is DKGKVSSKMET. Helical transmembrane passes span 239–259, 283–303, 348–368, 381–401, 464–484, 491–511, 512–532, and 553–573; these read LMCL…ITGT, SWFL…WIWL, IVTL…DPGF, GYVT…LIPA, PLGS…VTSL, PATI…IHVN, PLHI…LPVA, and AGLG…FTWI. A glycan (N-linked (GlcNAc...) asparagine) is linked at N591.

Belongs to the SLC13A/DASS transporter (TC 2.A.47) family. NADC subfamily. Kidney and intestine.

Its subcellular location is the apical cell membrane. The enzyme catalyses sulfate(out) + 3 Na(+)(out) = sulfate(in) + 3 Na(+)(in). It catalyses the reaction selenate(out) + 3 Na(+)(out) = selenate(in) + 3 Na(+)(in). The catalysed reaction is thiosulfate(out) + 3 Na(+)(out) = thiosulfate(in) + 3 Na(+)(in). Functionally, sodium:sulfate symporter that mediates sulfate reabsorption in the kidney and small intestine. Can also mediate the transport of selenate and thiosulfate. The polypeptide is Solute carrier family 13 member 1 (Slc13a1) (Rattus norvegicus (Rat)).